The sequence spans 66 residues: uncharacterized protein (66 aa).

2 helical membrane-spanning segments follow: residues 3-23 (LIHV…PFAN) and 34-54 (FILA…AIVY).

The protein localises to the cell membrane. This is an uncharacterized protein from Bacillus subtilis (strain 168).